Here is a 242-residue protein sequence, read N- to C-terminus: Mannose-P-dolichol utilization defect 1 protein homolog (242 aa).

In terms of domain architecture, PQ-loop 1 spans 37–95; the sequence is LSRGLGFAITLGSILLFVPQILKIQAARSAQGISAASQLLALVGAIGTASYSYRSGFVF. 7 helical membrane passes run 40–60, 68–88, 98–118, 120–140, 148–168, 180–200, and 207–227; these read GLGFAITLGSILLFVPQILKI, GISAASQLLALVGAIGTASYS, WGDSFFVAVQLVIIILQIFLF, GQTMLSVGFLGIVSAVAYGVV, TLTAVQTAGIPIVVVSKLLQI, LSLISVFLQFAGTLARVFTSV, and LLIVSYSTAAVLNGLIFAQFF. Positions 152-202 constitute a PQ-loop 2 domain; that stretch reads VQTAGIPIVVVSKLLQISQNYRAQSTGQLSLISVFLQFAGTLARVFTSVQD.

It belongs to the MPDU1 (TC 2.A.43.3) family.

It localises to the membrane. The protein is Mannose-P-dolichol utilization defect 1 protein homolog of Caenorhabditis elegans.